A 392-amino-acid polypeptide reads, in one-letter code: Small ribosomal subunit protein bS1 (392 aa).

S1 motif domains follow at residues 16–90, 108–173, 194–262, and 279–348; these read GDKV…LSKR, DEII…LSRK, GDVI…LSIK, and DDVI…LSIK.

Belongs to the bacterial ribosomal protein bS1 family.

Its function is as follows. Binds mRNA; thus facilitating recognition of the initiation point. It is needed to translate mRNA with a short Shine-Dalgarno (SD) purine-rich sequence. The chain is Small ribosomal subunit protein bS1 (rpsA) from Staphylococcus haemolyticus (strain JCSC1435).